Here is a 379-residue protein sequence, read N- to C-terminus: DNA-directed RNA polymerase subunit Rpo1C (379 aa).

Belongs to the RNA polymerase beta' chain family. As to quaternary structure, part of the RNA polymerase complex.

It is found in the cytoplasm. It carries out the reaction RNA(n) + a ribonucleoside 5'-triphosphate = RNA(n+1) + diphosphate. Its function is as follows. DNA-dependent RNA polymerase (RNAP) catalyzes the transcription of DNA into RNA using the four ribonucleoside triphosphates as substrates. Forms part of the jaw domain. In Pyrobaculum aerophilum (strain ATCC 51768 / DSM 7523 / JCM 9630 / CIP 104966 / NBRC 100827 / IM2), this protein is DNA-directed RNA polymerase subunit Rpo1C.